The sequence spans 280 residues: Vitamin B12-binding protein (280 aa).

Positions methionine 1–alanine 27 are cleaved as a signal peptide. Residues arginine 30–alanine 277 enclose the Fe/B12 periplasmic-binding domain. Tyrosine 57 provides a ligand contact to cyanocob(III)alamin. Cysteine 190 and cysteine 266 are disulfide-bonded.

It belongs to the BtuF family. In terms of assembly, the complex is composed of two ATP-binding proteins (BtuD), two transmembrane proteins (BtuC) and a solute-binding protein (BtuF).

It is found in the periplasm. Part of the ABC transporter complex BtuCDF involved in vitamin B12 import. Binds vitamin B12 and delivers it to the periplasmic surface of BtuC. The polypeptide is Vitamin B12-binding protein (Yersinia pseudotuberculosis serotype O:1b (strain IP 31758)).